We begin with the raw amino-acid sequence, 144 residues long: Catabolic 3-dehydroquinase (144 aa).

Residue Tyr24 is the Proton acceptor of the active site. Substrate-binding residues include Asn76, His82, and Asp89. Residue His102 is the Proton donor of the active site. Substrate-binding positions include 103–104 and Arg113; that span reads IT.

Belongs to the type-II 3-dehydroquinase family. Homododecamer. Adopts a ring-like structure, composed of an arrangement of two hexameric rings stacked on top of one another.

The enzyme catalyses 3-dehydroquinate = 3-dehydroshikimate + H2O. The protein operates within aromatic compound metabolism; 3,4-dihydroxybenzoate biosynthesis; 3,4-dihydroxybenzoate from 3-dehydroquinate: step 1/2. In terms of biological role, is involved in the catabolism of quinate. Allows the utilization of quinate as carbon source via the beta-ketoadipate pathway. The sequence is that of Catabolic 3-dehydroquinase from Debaryomyces hansenii (strain ATCC 36239 / CBS 767 / BCRC 21394 / JCM 1990 / NBRC 0083 / IGC 2968) (Yeast).